Here is a 53-residue protein sequence, read N- to C-terminus: Conotoxin Cal6.31 (53 aa).

The first 24 residues, 1 to 24 (MKLTCVLIAAVLLLAVCQLDSADA), serve as a signal peptide directing secretion. Intrachain disulfides connect cysteine 29-cysteine 43, cysteine 36-cysteine 47, and cysteine 42-cysteine 51.

This sequence belongs to the conotoxin O1 superfamily. In terms of tissue distribution, expressed by the venom duct.

Its subcellular location is the secreted. Functionally, probable neurotoxin. The sequence is that of Conotoxin Cal6.31 from Californiconus californicus (California cone).